We begin with the raw amino-acid sequence, 197 residues long: UPF0319 protein VP0761 (197 aa).

Residues 1–20 (MKKTTTLLGICAILSAPAFA) form the signal peptide.

This sequence belongs to the UPF0319 family.

This chain is UPF0319 protein VP0761, found in Vibrio parahaemolyticus serotype O3:K6 (strain RIMD 2210633).